Here is a 156-residue protein sequence, read N- to C-terminus: Small ribosomal subunit protein uS7 (156 aa).

The protein belongs to the universal ribosomal protein uS7 family. As to quaternary structure, part of the 30S ribosomal subunit. Contacts proteins S9 and S11.

Its function is as follows. One of the primary rRNA binding proteins, it binds directly to 16S rRNA where it nucleates assembly of the head domain of the 30S subunit. Is located at the subunit interface close to the decoding center, probably blocks exit of the E-site tRNA. The protein is Small ribosomal subunit protein uS7 of Baumannia cicadellinicola subsp. Homalodisca coagulata.